The chain runs to 66 residues: Photosystem II reaction center protein J (66 aa).

The segment at Met1–Ala23 is disordered. The helical transmembrane segment at Leu37–Tyr57 threads the bilayer.

This sequence belongs to the PsbJ family. PSII is composed of 1 copy each of membrane proteins PsbA, PsbB, PsbC, PsbD, PsbE, PsbF, PsbH, PsbI, PsbJ, PsbK, PsbL, PsbM, PsbT, PsbX, PsbY, PsbZ, Psb30/Ycf12, peripheral proteins PsbO, CyanoQ (PsbQ), PsbU, PsbV and a large number of cofactors. It forms dimeric complexes.

Its subcellular location is the cellular thylakoid membrane. In terms of biological role, one of the components of the core complex of photosystem II (PSII). PSII is a light-driven water:plastoquinone oxidoreductase that uses light energy to abstract electrons from H(2)O, generating O(2) and a proton gradient subsequently used for ATP formation. It consists of a core antenna complex that captures photons, and an electron transfer chain that converts photonic excitation into a charge separation. The chain is Photosystem II reaction center protein J from Parasynechococcus marenigrum (strain WH8102).